The following is a 280-amino-acid chain: 4-diphosphocytidyl-2-C-methyl-D-erythritol kinase (280 aa).

Lys8 is an active-site residue. Pro91–Ser101 is an ATP binding site. The active site involves Asp133.

It belongs to the GHMP kinase family. IspE subfamily.

The catalysed reaction is 4-CDP-2-C-methyl-D-erythritol + ATP = 4-CDP-2-C-methyl-D-erythritol 2-phosphate + ADP + H(+). It functions in the pathway isoprenoid biosynthesis; isopentenyl diphosphate biosynthesis via DXP pathway; isopentenyl diphosphate from 1-deoxy-D-xylulose 5-phosphate: step 3/6. Catalyzes the phosphorylation of the position 2 hydroxy group of 4-diphosphocytidyl-2C-methyl-D-erythritol. The sequence is that of 4-diphosphocytidyl-2-C-methyl-D-erythritol kinase from Clostridium novyi (strain NT).